The primary structure comprises 93 residues: Bacterial microcompartment shell protein PduA (93 aa).

One can recognise a BMC domain in the interval 5–89; sequence ALGMVETKGL…PHTDVEKILP (85 aa).

This sequence belongs to the bacterial microcompartments protein family. Homohexamer with a central pore; Lys-26 and Arg-79 interactions are very important for hexamer symmetry. The hexamers pack against each other in arrays. Interacts individually with shell proteins PduB, PduB', PduJ, PduK, PduN and PduU. Modeling suggests PduC, PduD, PduE, PduL and PduP interact with a cleft formed by the C-terminal segments of 2 adjacent PduA subunits (on the BMC luminal side) in the hexamer.

Its subcellular location is the bacterial microcompartment. It functions in the pathway polyol metabolism; 1,2-propanediol degradation. One of the major shell proteins of the bacterial microcompartment (BMC) dedicated to 1,2-propanediol (1,2-PD) degradation, probably important for metabolite diffusion into and out of the BMC. Overexpression of a C-terminally mutated form (PduA*) makes thin parallel filaments with a honeycomb-like assembly in cross-section that probably form nanotubes. The filaments interfere with septation. PduA is probably the hub for binding multiple enzymes to the interior of the BMC. At least one of PduA or PduJ is required for BMC assembly; it must be encoded as the first gene in the pdu operon. Its function is as follows. Expression of a cosmid containing the full 21-gene pdu operon in E.coli allows E.coli to grow on 1,2-PD with the appearance of BMCs in its cytoplasm. Overexpression of this protein leads to aberrant intracellular filaments. In terms of biological role, the 1,2-PD-specific bacterial microcompartment (BMC) concentrates low levels of 1,2-PD catabolic enzymes, concentrates volatile reaction intermediates thus enhancing pathway flux and keeps the level of toxic, mutagenic propionaldehyde low. The protein is Bacterial microcompartment shell protein PduA of Citrobacter freundii.